A 498-amino-acid chain; its full sequence is ATP synthase subunit beta, chloroplastic (498 aa).

The span at 1-14 (MRTNPTTSRPGVST) shows a compositional bias: polar residues. Residues 1-20 (MRTNPTTSRPGVSTSEEKST) form a disordered region. 172–179 (GGAGVGKT) lines the ATP pocket.

Belongs to the ATPase alpha/beta chains family. As to quaternary structure, F-type ATPases have 2 components, CF(1) - the catalytic core - and CF(0) - the membrane proton channel. CF(1) has five subunits: alpha(3), beta(3), gamma(1), delta(1), epsilon(1). CF(0) has four main subunits: a(1), b(1), b'(1) and c(9-12).

It is found in the plastid. Its subcellular location is the chloroplast thylakoid membrane. The enzyme catalyses ATP + H2O + 4 H(+)(in) = ADP + phosphate + 5 H(+)(out). In terms of biological role, produces ATP from ADP in the presence of a proton gradient across the membrane. The catalytic sites are hosted primarily by the beta subunits. In Hordeum vulgare (Barley), this protein is ATP synthase subunit beta, chloroplastic.